The following is a 302-amino-acid chain: 3-methyl-2-oxobutanoate hydroxymethyltransferase 1 (302 aa).

Mg(2+) contacts are provided by Asp75 and Asp118. Residues 75-76 (DS), Asp118, and Lys147 contribute to the 3-methyl-2-oxobutanoate site. Glu149 serves as a coordination point for Mg(2+). Glu217 serves as the catalytic Proton acceptor.

It belongs to the PanB family. In terms of assembly, homodecamer; pentamer of dimers. Mg(2+) serves as cofactor.

It localises to the cytoplasm. The catalysed reaction is 3-methyl-2-oxobutanoate + (6R)-5,10-methylene-5,6,7,8-tetrahydrofolate + H2O = 2-dehydropantoate + (6S)-5,6,7,8-tetrahydrofolate. The protein operates within cofactor biosynthesis; (R)-pantothenate biosynthesis; (R)-pantoate from 3-methyl-2-oxobutanoate: step 1/2. Its function is as follows. Catalyzes the reversible reaction in which hydroxymethyl group from 5,10-methylenetetrahydrofolate is transferred onto alpha-ketoisovalerate to form ketopantoate. In Zymomonas mobilis subsp. mobilis (strain ATCC 31821 / ZM4 / CP4), this protein is 3-methyl-2-oxobutanoate hydroxymethyltransferase 1.